The primary structure comprises 277 residues: Undecaprenyl-diphosphatase 2 (277 aa).

6 helical membrane passes run 43 to 63 (RAMA…VWEF), 87 to 107 (LLIA…TIHE), 109 to 129 (LFNP…MLWA), 183 to 203 (AATE…AVYS), 214 to 234 (SDLP…MIAV), and 254 to 274 (IAFG…WTAA).

This sequence belongs to the UppP family.

Its subcellular location is the cell inner membrane. The catalysed reaction is di-trans,octa-cis-undecaprenyl diphosphate + H2O = di-trans,octa-cis-undecaprenyl phosphate + phosphate + H(+). Its function is as follows. Catalyzes the dephosphorylation of undecaprenyl diphosphate (UPP). Confers resistance to bacitracin. The sequence is that of Undecaprenyl-diphosphatase 2 from Pseudomonas fluorescens (strain Pf0-1).